Reading from the N-terminus, the 366-residue chain is Bacteriochlorophyll a protein (366 aa).

Positions 111, 146, 290, 297, and 298 each coordinate bacteriochlorophyll a.

As to quaternary structure, homotrimer. Each subunit contains 7 molecules of bacteriochlorophyll a.

Functionally, intermediary in the transfer of excitation energy from the chlorophyll to the reaction centers. The protein is Bacteriochlorophyll a protein (fmoA) of Chlorobaculum tepidum (strain ATCC 49652 / DSM 12025 / NBRC 103806 / TLS) (Chlorobium tepidum).